Consider the following 248-residue polypeptide: Triosephosphate isomerase (248 aa).

Position 9–11 (9–11 (NWK)) interacts with substrate. The Electrophile role is filled by His94. Catalysis depends on Glu166, which acts as the Proton acceptor. Residues Gly172, Ser212, and 233 to 234 (GG) contribute to the substrate site.

The protein belongs to the triosephosphate isomerase family. As to quaternary structure, homodimer.

It is found in the cytoplasm. The enzyme catalyses D-glyceraldehyde 3-phosphate = dihydroxyacetone phosphate. It functions in the pathway carbohydrate biosynthesis; gluconeogenesis. It participates in carbohydrate degradation; glycolysis; D-glyceraldehyde 3-phosphate from glycerone phosphate: step 1/1. Its function is as follows. Involved in the gluconeogenesis. Catalyzes stereospecifically the conversion of dihydroxyacetone phosphate (DHAP) to D-glyceraldehyde-3-phosphate (G3P). The protein is Triosephosphate isomerase of Caldanaerobacter subterraneus subsp. tengcongensis (strain DSM 15242 / JCM 11007 / NBRC 100824 / MB4) (Thermoanaerobacter tengcongensis).